Here is a 262-residue protein sequence, read N- to C-terminus: Tetratricopeptide repeat protein 33 (262 aa).

Residues alanine 17–lysine 63 are disordered. TPR repeat units lie at residues serine 59–aspartate 92, alanine 93–serine 126, and tryptophan 127–asparagine 160. Serine 197 carries the phosphoserine modification.

This Mus musculus (Mouse) protein is Tetratricopeptide repeat protein 33 (Ttc33).